We begin with the raw amino-acid sequence, 274 residues long: Nickel/cobalt efflux system RcnA (274 aa).

The Periplasmic segment spans residues 1 to 12; it reads MTEFTTLLQQGN. Residues 13 to 33 form a helical membrane-spanning segment; that stretch reads AWFFIPSAILLGALHGLEPGH. The Cytoplasmic segment spans residues 34–56; sequence SKTMMAAFIIAIKGTIKQAVMLG. The helical transmembrane segment at 57–77 threads the bilayer; the sequence is LAATISHTAVVWLIAFGGMVI. The Periplasmic segment spans residues 78–86; sequence SKRFTAQSA. A helical transmembrane segment spans residues 87-107; the sequence is EPWLQLISAVIIISTAFWMFW. The Cytoplasmic segment spans residues 108-175; the sequence is RTWRGERNWL…DGREVTNWQI (68 aa). A disordered region spans residues 127–153; that stretch reads HHHHDHEHHHDHGHHHHHEHGEYQDAH. A compositionally biased stretch (basic residues) spans 129 to 144; the sequence is HHDHEHHHDHGHHHHH. A helical membrane pass occupies residues 176–196; that stretch reads LLFGLTGGLIPCPAAITVLLI. Over 197 to 209 the chain is Periplasmic; the sequence is CIQLKALTLGATL. The chain crosses the membrane as a helical span at residues 210–230; the sequence is VVSFSIGLALTLVTVGVGAAI. Residues 231–251 lie on the Cytoplasmic side of the membrane; that stretch reads SVQQVAKRWSGFNTLAKRAPY. Residues 252–272 form a helical membrane-spanning segment; that stretch reads FSSLLIGLVGVYMGVHGFMGI. The Periplasmic segment spans residues 273-274; the sequence is MR.

This sequence belongs to the NiCoT transporter (TC 2.A.52) family. RcnA subfamily.

It is found in the cell inner membrane. Functionally, efflux system for nickel and cobalt. The protein is Nickel/cobalt efflux system RcnA (rcnA) of Escherichia coli (strain K12).